The primary structure comprises 155 residues: Class I hydrophobin C (155 aa).

An N-terminal signal peptide occupies residues 1 to 22 (MLVTMRLSRSIAVFTLVTYATG). Intrachain disulfides connect Cys-52/Cys-129, Cys-60/Cys-123, Cys-61/Cys-101, and Cys-130/Cys-148.

This sequence belongs to the fungal hydrophobin family. As to quaternary structure, self-assembles to form functional amyloid fibrils called rodlets. Self-assembly into fibrillar rodlets occurs spontaneously at hydrophobic:hydrophilic interfaces and the rodlets further associate laterally to form amphipathic monolayers.

The protein localises to the secreted. It localises to the spore wall. In terms of biological role, aerial growth, conidiation, and dispersal of filamentous fungi in the environment rely upon a capability of their secreting small amphipathic proteins called hydrophobins (HPBs) with low sequence identity. Class I can self-assemble into an outermost layer of rodlet bundles on aerial cell surfaces, conferring cellular hydrophobicity that supports fungal growth, development and dispersal; whereas Class II form highly ordered films at water-air interfaces through intermolecular interactions but contribute nothing to the rodlet structure. RodC is a class I hydrophobin that, unlike rodA, is not required for rodlet formation. This chain is Class I hydrophobin C, found in Aspergillus fumigatus (strain ATCC MYA-4609 / CBS 101355 / FGSC A1100 / Af293) (Neosartorya fumigata).